An 85-amino-acid polypeptide reads, in one-letter code: uncharacterized protein (85 aa).

Positions 17-53 (KKRYEMLVQELLKEDDEEREKILAEELELLLDFLKKA) form a coiled coil.

This is an uncharacterized protein from Archaeoglobus fulgidus (strain ATCC 49558 / DSM 4304 / JCM 9628 / NBRC 100126 / VC-16).